The following is a 366-amino-acid chain: Aminomethyltransferase (366 aa).

It belongs to the GcvT family. The glycine cleavage system is composed of four proteins: P, T, L and H.

It catalyses the reaction N(6)-[(R)-S(8)-aminomethyldihydrolipoyl]-L-lysyl-[protein] + (6S)-5,6,7,8-tetrahydrofolate = N(6)-[(R)-dihydrolipoyl]-L-lysyl-[protein] + (6R)-5,10-methylene-5,6,7,8-tetrahydrofolate + NH4(+). Functionally, the glycine cleavage system catalyzes the degradation of glycine. This is Aminomethyltransferase from Bordetella bronchiseptica (strain ATCC BAA-588 / NCTC 13252 / RB50) (Alcaligenes bronchisepticus).